The primary structure comprises 183 residues: Small ribosomal subunit protein uS4c (183 aa).

The S4 RNA-binding domain maps to 82-143 (MRLDNILFRL…KQRSKALIQN (62 aa)).

The protein belongs to the universal ribosomal protein uS4 family. In terms of assembly, part of the 30S ribosomal subunit. Contacts protein S5. The interaction surface between S4 and S5 is involved in control of translational fidelity.

Its subcellular location is the plastid. The protein resides in the chloroplast. Functionally, one of the primary rRNA binding proteins, it binds directly to 16S rRNA where it nucleates assembly of the body of the 30S subunit. Its function is as follows. With S5 and S12 plays an important role in translational accuracy. This is Small ribosomal subunit protein uS4c (rps4) from Freesia sp. (strain Lejeune 1997).